The following is a 652-amino-acid chain: Serine/threonine-protein kinase ssp1 (652 aa).

Tyr58 is modified (phosphotyrosine). A Phosphoserine modification is found at Ser59. At Tyr63 the chain carries Phosphotyrosine. The Protein kinase domain maps to 135 to 409 (YEIIKELGRG…LVEVKLHPWT (275 aa)). Residues 141–149 (LGRGMHGKV) and Lys164 each bind ATP. Asp267 serves as the catalytic Proton acceptor. 2 disordered regions span residues 467 to 491 (DSSS…SIGL) and 506 to 529 (NESQ…SSEK). Residues 508-518 (SQKDRERKQVH) show a composition bias toward basic and acidic residues.

Belongs to the protein kinase superfamily. Ser/Thr protein kinase family.

The protein resides in the cytoplasm. The catalysed reaction is L-seryl-[protein] + ATP = O-phospho-L-seryl-[protein] + ADP + H(+). It carries out the reaction L-threonyl-[protein] + ATP = O-phospho-L-threonyl-[protein] + ADP + H(+). Its function is as follows. Involved in actin localization and thus in polarized cell growth. The sequence is that of Serine/threonine-protein kinase ssp1 (ssp1) from Schizosaccharomyces pombe (strain 972 / ATCC 24843) (Fission yeast).